The following is a 231-amino-acid chain: Phosphoribosylformylglycinamidine synthase subunit PurQ (231 aa).

The Glutamine amidotransferase type-1 domain maps to F3 to R231. Residue C86 is the Nucleophile of the active site. Residues H203 and E205 contribute to the active site.

As to quaternary structure, part of the FGAM synthase complex composed of 1 PurL, 1 PurQ and 2 PurS subunits.

The protein resides in the cytoplasm. The enzyme catalyses N(2)-formyl-N(1)-(5-phospho-beta-D-ribosyl)glycinamide + L-glutamine + ATP + H2O = 2-formamido-N(1)-(5-O-phospho-beta-D-ribosyl)acetamidine + L-glutamate + ADP + phosphate + H(+). It carries out the reaction L-glutamine + H2O = L-glutamate + NH4(+). The protein operates within purine metabolism; IMP biosynthesis via de novo pathway; 5-amino-1-(5-phospho-D-ribosyl)imidazole from N(2)-formyl-N(1)-(5-phospho-D-ribosyl)glycinamide: step 1/2. Functionally, part of the phosphoribosylformylglycinamidine synthase complex involved in the purines biosynthetic pathway. Catalyzes the ATP-dependent conversion of formylglycinamide ribonucleotide (FGAR) and glutamine to yield formylglycinamidine ribonucleotide (FGAM) and glutamate. The FGAM synthase complex is composed of three subunits. PurQ produces an ammonia molecule by converting glutamine to glutamate. PurL transfers the ammonia molecule to FGAR to form FGAM in an ATP-dependent manner. PurS interacts with PurQ and PurL and is thought to assist in the transfer of the ammonia molecule from PurQ to PurL. The sequence is that of Phosphoribosylformylglycinamidine synthase subunit PurQ from Koribacter versatilis (strain Ellin345).